Consider the following 542-residue polypeptide: Putative leucine aminopeptidase 1 (542 aa).

Residues K294 and D299 each contribute to the Mn(2+) site. K323 is an active-site residue. Residues D336, D396, and E398 each contribute to the Mn(2+) site. R400 is an active-site residue.

The protein belongs to the peptidase M17 family. Homohexamer (dimer of homotrimers). Mn(2+) is required as a cofactor.

It localises to the cytoplasm. The enzyme catalyses Release of an N-terminal amino acid, Xaa-|-Yaa-, in which Xaa is preferably Leu, but may be other amino acids including Pro although not Arg or Lys, and Yaa may be Pro. Amino acid amides and methyl esters are also readily hydrolyzed, but rates on arylamides are exceedingly low.. It carries out the reaction Release of N-terminal proline from a peptide.. Functionally, presumably involved in the processing and regular turnover of intracellular proteins. Catalyzes the removal of unsubstituted N-terminal amino acids from various peptides. This is Putative leucine aminopeptidase 1 from Oryza sativa subsp. japonica (Rice).